The chain runs to 182 residues: Crossover junction endodeoxyribonuclease RuvC (182 aa).

Active-site residues include aspartate 7, glutamate 68, and aspartate 141. Positions 7, 68, and 141 each coordinate Mg(2+).

The protein belongs to the RuvC family. In terms of assembly, homodimer which binds Holliday junction (HJ) DNA. The HJ becomes 2-fold symmetrical on binding to RuvC with unstacked arms; it has a different conformation from HJ DNA in complex with RuvA. In the full resolvosome a probable DNA-RuvA(4)-RuvB(12)-RuvC(2) complex forms which resolves the HJ. Mg(2+) serves as cofactor.

It localises to the cytoplasm. It carries out the reaction Endonucleolytic cleavage at a junction such as a reciprocal single-stranded crossover between two homologous DNA duplexes (Holliday junction).. The RuvA-RuvB-RuvC complex processes Holliday junction (HJ) DNA during genetic recombination and DNA repair. Endonuclease that resolves HJ intermediates. Cleaves cruciform DNA by making single-stranded nicks across the HJ at symmetrical positions within the homologous arms, yielding a 5'-phosphate and a 3'-hydroxyl group; requires a central core of homology in the junction. The consensus cleavage sequence is 5'-(A/T)TT(C/G)-3'. Cleavage occurs on the 3'-side of the TT dinucleotide at the point of strand exchange. HJ branch migration catalyzed by RuvA-RuvB allows RuvC to scan DNA until it finds its consensus sequence, where it cleaves and resolves the cruciform DNA. The protein is Crossover junction endodeoxyribonuclease RuvC of Thermobifida fusca (strain YX).